The primary structure comprises 535 residues: Probable C4-dicarboxylate sensor kinase (535 aa).

At 1–11 (MNKKKLSIRWK) the chain is on the cytoplasmic side. The helical transmembrane segment at 12–32 (ITILSYILVIFSFLIGGIVLI) threads the bilayer. Over 33–172 (GNIQHTEERE…IADILLHLKR (140 aa)) the chain is Extracellular. Residues 173-193 (DIAFIVVLTLGFGLAGSFLLA) traverse the membrane as a helical segment. The Cytoplasmic segment spans residues 194-535 (RHIKKQMFQL…MKGEEAQHGS (342 aa)). The 64-residue stretch at 213-276 (EERTATFHSM…PEIVERNKAV (64 aa)) folds into the PAS domain. Positions 333-528 (VQNHEHMNKL…SFSIVFPMKG (196 aa)) constitute a Histidine kinase domain. A Phosphohistidine; by autocatalysis modification is found at His336.

Its subcellular location is the cell membrane. It carries out the reaction ATP + protein L-histidine = ADP + protein N-phospho-L-histidine.. Member of the two-component regulatory system DctS/DctR. Probably activates DctR by phosphorylation. Essential for expression of dctP. The chain is Probable C4-dicarboxylate sensor kinase (dctS) from Bacillus subtilis (strain 168).